The following is a 429-amino-acid chain: GTPase Obg (429 aa).

The 158-residue stretch at 1–158 (MFADSAKIFI…LNVTLELKVI (158 aa)) folds into the Obg domain. Residues 159–333 (ADVGLVGFPN…LLYYVSDLLK (175 aa)) form the OBG-type G domain. Residues 165–172 (GFPNVGKS), 190–194 (FTTLN), 212–215 (DIPG), 282–285 (NKTD), and 314–316 (SAV) contribute to the GTP site. Mg(2+) is bound by residues serine 172 and threonine 192. Residues 350–429 (ENLVMSEPYT…MYGLEFDYYK (80 aa)) enclose the OCT domain.

Belongs to the TRAFAC class OBG-HflX-like GTPase superfamily. OBG GTPase family. Monomer. Mg(2+) serves as cofactor.

It localises to the cytoplasm. An essential GTPase which binds GTP, GDP and possibly (p)ppGpp with moderate affinity, with high nucleotide exchange rates and a fairly low GTP hydrolysis rate. Plays a role in control of the cell cycle, stress response, ribosome biogenesis and in those bacteria that undergo differentiation, in morphogenesis control. The polypeptide is GTPase Obg (Lachnoclostridium phytofermentans (strain ATCC 700394 / DSM 18823 / ISDg) (Clostridium phytofermentans)).